The following is a 227-amino-acid chain: 7-cyano-7-deazaguanine synthase (227 aa).

7–17 serves as a coordination point for ATP; the sequence is VSGGMDSLVAT. Positions 187, 195, 198, and 201 each coordinate Zn(2+).

Belongs to the QueC family. Zn(2+) is required as a cofactor.

The catalysed reaction is 7-carboxy-7-deazaguanine + NH4(+) + ATP = 7-cyano-7-deazaguanine + ADP + phosphate + H2O + H(+). It functions in the pathway purine metabolism; 7-cyano-7-deazaguanine biosynthesis. In terms of biological role, catalyzes the ATP-dependent conversion of 7-carboxy-7-deazaguanine (CDG) to 7-cyano-7-deazaguanine (preQ(0)). The protein is 7-cyano-7-deazaguanine synthase of Chlorobaculum parvum (strain DSM 263 / NCIMB 8327) (Chlorobium vibrioforme subsp. thiosulfatophilum).